Consider the following 444-residue polypeptide: 23S rRNA (uracil(1939)-C(5))-methyltransferase RlmD (444 aa).

A TRAM domain is found at 5–67 (RNRLDRTPFQ…RHFDEAKTVE (63 aa)). C80, C86, C89, and C168 together coordinate [4Fe-4S] cluster. Positions 276, 305, 310, 326, 353, and 374 each coordinate S-adenosyl-L-methionine. The active-site Nucleophile is the C400.

It belongs to the class I-like SAM-binding methyltransferase superfamily. RNA M5U methyltransferase family. RlmD subfamily.

It carries out the reaction uridine(1939) in 23S rRNA + S-adenosyl-L-methionine = 5-methyluridine(1939) in 23S rRNA + S-adenosyl-L-homocysteine + H(+). Catalyzes the formation of 5-methyl-uridine at position 1939 (m5U1939) in 23S rRNA. This chain is 23S rRNA (uracil(1939)-C(5))-methyltransferase RlmD, found in Xanthomonas euvesicatoria pv. vesicatoria (strain 85-10) (Xanthomonas campestris pv. vesicatoria).